Consider the following 1843-residue polypeptide: Proteasome activator complex subunit 4 (1843 aa).

The span at 1–11 shows a compositional bias: low complexity; the sequence is MEPAERAGVGE. A disordered region spans residues 1–25; the sequence is MEPAERAGVGEPPEPGGRPEPGPRG. The span at 12–22 shows a compositional bias: pro residues; it reads PPEPGGRPEPG. 2 HEAT repeats span residues 475–519 and 998–1037; these read PEGP…LVDC and NFCCRDIIPLVLEFLRPDRQGVTQQQFKGALYCLLGNHSG. Ser-1121 is subject to Phosphoserine. HEAT repeat units lie at residues 1179-1217 and 1354-1392; these read RVLPLRAIRFFVENLNHDAIVVRKMAISAVAGILKQLKR and DAFLPVLKPHLEHLVADSHESTQRCVAEIIAGLIRGSKH. Phosphoserine is present on Ser-1614. HEAT repeat units lie at residues 1636–1674 and 1680–1718; these read PHQVPLVLQVLKQTARSSSWHARYTVLTYLQTMVFYNLF and EDAVKDIRWLVISLLEDEQLEVREMAATTLSGLLQCNFL. Residues 1650–1738 form a bromodomain-like (BRDL) region; that stretch reads ARSSSWHARY…EQLCKTKLPK (89 aa). At Ser-1746 the chain carries Phosphoserine.

The protein belongs to the BLM10 family. Homodimer. Interacts with the 20S and 26S proteasomes. Component of the spermatoproteasome, a form of the proteasome specifically found in testis.

Its subcellular location is the cytoplasm. The protein resides in the cytosol. It localises to the nucleus. The protein localises to the nucleus speckle. Associated component of the proteasome that specifically recognizes acetylated histones and promotes ATP- and ubiquitin-independent degradation of core histones during spermatogenesis and DNA damage response. Recognizes and binds acetylated histones via its bromodomain-like (BRDL) region and activates the proteasome by opening the gated channel for substrate entry. Binds to the core proteasome via its C-terminus, which occupies the same binding sites as the proteasomal ATPases, opening the closed structure of the proteasome via an active gating mechanism. Component of the spermatoproteasome, a form of the proteasome specifically found in testis: binds to acetylated histones and promotes degradation of histones, thereby participating actively to the exchange of histones during spermatogenesis. Also involved in DNA damage response in somatic cells, by promoting degradation of histones following DNA double-strand breaks. This is Proteasome activator complex subunit 4 from Homo sapiens (Human).